Here is a 326-residue protein sequence, read N- to C-terminus: Microtubule-associated protein RP/EB family member 2 (326 aa).

A Phosphoserine modification is found at Ser9. The Calponin-homology (CH) domain maps to Thr56–Asp158. A Phosphotyrosine modification is found at Tyr166. Disordered stretches follow at residues Glu170–Leu239 and Tyr297–Tyr326. A DCTN1-binding region spans residues Gln186–Tyr326. Low complexity predominate over residues Ser199–Ser233. Residues Ser218 and Ser235 each carry the phosphoserine modification. Residues Ser235 to Gln305 enclose the EB1 C-terminal domain. An APC-binding region spans residues Glu258–Glu301. Residues Asp300–Glu312 are compositionally biased toward acidic residues. Residues Asp317–Tyr326 are compositionally biased toward low complexity.

It belongs to the MAPRE family. As to quaternary structure, interacts with DCTN1. Interacts with APC (via C-terminal). Interacts with monomeric and polymerized tubulin. Interacts with SLAIN1. Interacts (via the N-terminal region) with BAG1. Interacts with ASB14. Ubiquitinated in an ASB14-dependent manner; leading to proteasomal degradation. Post-translationally, phosphorylated at Ser-235 by CK2 leading to enhanced cell adhesion. Phosphorylated by CDK1 and AURKB during mitosis reduces the binding affinity of MAPRE2 for microtubules. Expressed during early stages of apico-basal epithelial differentiation but down-regulated in most cells at later stages.

The protein resides in the cytoplasm. Its subcellular location is the cytoskeleton. It is found in the spindle. Its function is as follows. Adapter protein that is involved in microtubule polymerization, and spindle function by stabilizing microtubules and anchoring them at centrosomes. Therefore, ensures mitotic progression and genome stability. Acts as a central regulator of microtubule reorganization in apico-basal epithelial differentiation. Plays a role during oocyte meiosis by regulating microtubule dynamics. Participates in neurite growth by interacting with plexin B3/PLXNB3 and microtubule reorganization during apico-basal epithelial differentiation. Plays also an essential role for cell migration and focal adhesion dynamics. Mechanistically, recruits HAX1 to microtubules in order to regulate focal adhesion dynamics. The chain is Microtubule-associated protein RP/EB family member 2 (Mapre2) from Mus musculus (Mouse).